The primary structure comprises 182 residues: MSEIEVFDAEQLAGLIEGLAEAIGRDHPHLQKLTLIGIRTRGVPLAYRLRDRIATLLGIPPQVGELDITFFRDDLSAGGLRTPDRSEMPRDLTGQEVVLVDDVIFRGRTVRAALEALNHFGRPERVRLAVLIDRGHRQFPIQPDYCGCQLSTEPEQTVRVHLRETDAEERVLLIDKTAKIKS.

The PRPP-binding motif lies at 97–109 (VVLVDDVIFRGRT).

This sequence belongs to the purine/pyrimidine phosphoribosyltransferase family. PyrR subfamily.

The enzyme catalyses UMP + diphosphate = 5-phospho-alpha-D-ribose 1-diphosphate + uracil. In terms of biological role, regulates the transcription of the pyrimidine nucleotide (pyr) operon in response to exogenous pyrimidines. Functionally, also displays a weak uracil phosphoribosyltransferase activity which is not physiologically significant. This Synechococcus sp. (strain JA-2-3B'a(2-13)) (Cyanobacteria bacterium Yellowstone B-Prime) protein is Bifunctional protein PyrR.